Here is a 459-residue protein sequence, read N- to C-terminus: Argininosuccinate lyase (459 aa).

This sequence belongs to the lyase 1 family. Argininosuccinate lyase subfamily.

It is found in the cytoplasm. It catalyses the reaction 2-(N(omega)-L-arginino)succinate = fumarate + L-arginine. The protein operates within amino-acid biosynthesis; L-arginine biosynthesis; L-arginine from L-ornithine and carbamoyl phosphate: step 3/3. The polypeptide is Argininosuccinate lyase (Geobacillus kaustophilus (strain HTA426)).